An 83-amino-acid chain; its full sequence is Putative membrane protein insertion efficiency factor (83 aa).

Belongs to the UPF0161 family.

Its subcellular location is the cell membrane. Functionally, could be involved in insertion of integral membrane proteins into the membrane. The polypeptide is Putative membrane protein insertion efficiency factor (Streptococcus thermophilus (strain ATCC BAA-250 / LMG 18311)).